Here is a 171-residue protein sequence, read N- to C-terminus: Shikimate kinase (171 aa).

14 to 19 contributes to the ATP binding site; it reads GAGKST. S18 is a Mg(2+) binding site. Substrate-binding residues include D36, R60, and G82. Residue R120 coordinates ATP. R139 is a binding site for substrate. An ATP-binding site is contributed by Q156.

Belongs to the shikimate kinase family. In terms of assembly, monomer. The cofactor is Mg(2+).

Its subcellular location is the cytoplasm. The enzyme catalyses shikimate + ATP = 3-phosphoshikimate + ADP + H(+). It participates in metabolic intermediate biosynthesis; chorismate biosynthesis; chorismate from D-erythrose 4-phosphate and phosphoenolpyruvate: step 5/7. Catalyzes the specific phosphorylation of the 3-hydroxyl group of shikimic acid using ATP as a cosubstrate. In Shewanella frigidimarina (strain NCIMB 400), this protein is Shikimate kinase.